The primary structure comprises 384 residues: Acetylgalactosaminyl-O-glycosyl-glycoprotein beta-1,3-N-acetylglucosaminyltransferase (384 aa).

Residues 1 to 12 are Cytoplasmic-facing; sequence MAFPCRRSLTAK. A helical; Signal-anchor for type II membrane protein membrane pass occupies residues 13 to 31; that stretch reads TLACLLVGVSFLALQQWFL. Over 32–384 the chain is Lumenal; the sequence is QAPRSPREER…LSCDRGHRVS (353 aa). The segment at 34-68 is disordered; it reads PRSPREERSPQEETPEGPTDAPAADEPPSELVPGP. Residues asparagine 73, asparagine 77, and asparagine 196 are each glycosylated (N-linked (GlcNAc...) asparagine).

This sequence belongs to the glycosyltransferase 31 family. Present in stomach and colon (at protein level). Restricted in the stomach, colon and small intestine, where core 3 structure is present.

The protein resides in the golgi apparatus membrane. It catalyses the reaction a 3-O-[N-acetyl-alpha-D-galactosaminyl]-L-threonyl-[protein] + UDP-N-acetyl-alpha-D-glucosamine = a 3-O-[N-acetyl-beta-D-glucosaminyl-(1-&gt;3)-N-acetyl-alpha-D-galactosaminyl]-L-threonyl-[protein] + UDP + H(+). The enzyme catalyses a 3-O-[N-acetyl-alpha-D-galactosaminyl]-L-seryl-[protein] + UDP-N-acetyl-alpha-D-glucosamine = 3-O-[N-acetyl-beta-D-glucosaminyl-(1-&gt;3)-N-acetyl-alpha-D-galactosaminyl]-L-seryl-[protein] + UDP + H(+). It participates in protein modification; protein glycosylation. Beta-1,3-N-acetylglucosaminyltransferase that synthesizes the core 3 structure of the O-glycan, an important precursor in the biosynthesis of mucin-type glycoproteins. Plays an important role in the synthesis of mucin-type O-glycans in digestive organs. The protein is Acetylgalactosaminyl-O-glycosyl-glycoprotein beta-1,3-N-acetylglucosaminyltransferase (B3GNT6) of Homo sapiens (Human).